A 232-amino-acid chain; its full sequence is 5'-methylthioadenosine/S-adenosylhomocysteine nucleosidase (232 aa).

Glu12 acts as the Proton acceptor in catalysis. Substrate is bound by residues Gly78, Ile152, and 173 to 174 (ME). Asp197 (proton donor) is an active-site residue.

It belongs to the PNP/UDP phosphorylase family. MtnN subfamily. As to quaternary structure, homodimer.

It carries out the reaction S-adenosyl-L-homocysteine + H2O = S-(5-deoxy-D-ribos-5-yl)-L-homocysteine + adenine. The catalysed reaction is S-methyl-5'-thioadenosine + H2O = 5-(methylsulfanyl)-D-ribose + adenine. The enzyme catalyses 5'-deoxyadenosine + H2O = 5-deoxy-D-ribose + adenine. It participates in amino-acid biosynthesis; L-methionine biosynthesis via salvage pathway; S-methyl-5-thio-alpha-D-ribose 1-phosphate from S-methyl-5'-thioadenosine (hydrolase route): step 1/2. Functionally, catalyzes the irreversible cleavage of the glycosidic bond in both 5'-methylthioadenosine (MTA) and S-adenosylhomocysteine (SAH/AdoHcy) to adenine and the corresponding thioribose, 5'-methylthioribose and S-ribosylhomocysteine, respectively. Also cleaves 5'-deoxyadenosine, a toxic by-product of radical S-adenosylmethionine (SAM) enzymes, into 5-deoxyribose and adenine. Thus, is required for in vivo function of the radical SAM enzymes biotin synthase and lipoic acid synthase, that are inhibited by 5'-deoxyadenosine accumulation. This Citrobacter koseri (strain ATCC BAA-895 / CDC 4225-83 / SGSC4696) protein is 5'-methylthioadenosine/S-adenosylhomocysteine nucleosidase.